Reading from the N-terminus, the 354-residue chain is Selenide, water dikinase (354 aa).

Residue Cys-23 is part of the active site. ATP-binding positions include Lys-26 and 54–56 (TSD). Mg(2+) is bound at residue Asp-57. ATP is bound by residues Asp-74, Asp-97, and 145 to 147 (GHS). Residue Asp-97 coordinates Mg(2+). Asp-233 provides a ligand contact to Mg(2+).

This sequence belongs to the selenophosphate synthase 1 family. Class I subfamily. Homodimer. Mg(2+) serves as cofactor.

The catalysed reaction is hydrogenselenide + ATP + H2O = selenophosphate + AMP + phosphate + 2 H(+). In terms of biological role, synthesizes selenophosphate from selenide and ATP. This chain is Selenide, water dikinase, found in Burkholderia cenocepacia (strain ATCC BAA-245 / DSM 16553 / LMG 16656 / NCTC 13227 / J2315 / CF5610) (Burkholderia cepacia (strain J2315)).